A 555-amino-acid polypeptide reads, in one-letter code: Aerobic glycerol-3-phosphate dehydrogenase (555 aa).

24 to 52 (DLFIIGGGITGAGTALDAASRGMKVALSE) lines the FAD pocket.

It belongs to the FAD-dependent glycerol-3-phosphate dehydrogenase family. It depends on FAD as a cofactor.

It localises to the cytoplasm. The catalysed reaction is a quinone + sn-glycerol 3-phosphate = dihydroxyacetone phosphate + a quinol. It functions in the pathway polyol metabolism; glycerol degradation via glycerol kinase pathway; glycerone phosphate from sn-glycerol 3-phosphate (aerobic route): step 1/1. The chain is Aerobic glycerol-3-phosphate dehydrogenase (glpD) from Bacillus subtilis (strain 168).